Reading from the N-terminus, the 334-residue chain is Endochitinase 3 (334 aa).

Residues 1 to 23 form the signal peptide; sequence MRLLEFTALSSLLVLFLLLAVSA. In terms of domain architecture, Chitin-binding type-1 spans 24 to 65; it reads EQCGKQAGGARCPSGMCCSNFGWCGNTQDYCGPGKCQSQCPS. Disulfide bonds link cysteine 26-cysteine 41, cysteine 35-cysteine 47, cysteine 40-cysteine 54, and cysteine 59-cysteine 63. A disordered region spans residues 64–84; the sequence is PSGPGPTPRPPTPTPGPSTGD. A compositionally biased stretch (pro residues) spans 66–79; that stretch reads GPGPTPRPPTPTPG. 4-hydroxyproline is present on residues proline 73, proline 74, and proline 76. Cystine bridges form between cysteine 106–cysteine 168, cysteine 180–cysteine 188, and cysteine 287–cysteine 319. The Proton donor role is filled by glutamate 150. Positions 328-334 are cleaved as a propeptide — removed in mature form; sequence GLLLETM.

Belongs to the glycosyl hydrolase 19 family. Chitinase class I subfamily. The 4-hydroxyproline residues are not glycosylated in this plant vacuolar protein.

The protein resides in the vacuole. It carries out the reaction Random endo-hydrolysis of N-acetyl-beta-D-glucosaminide (1-&gt;4)-beta-linkages in chitin and chitodextrins.. In terms of biological role, defense against chitin-containing fungal pathogens. This is Endochitinase 3 (CHN14) from Nicotiana tabacum (Common tobacco).